The following is a 208-amino-acid chain: Transmembrane protein 222 (208 aa).

Positions 1–26 (MAEAEGSSLLLLPPPPPPPRMAEVEA) are disordered. Topologically, residues 1–55 (MAEAEGSSLLLLPPPPPPPRMAEVEAPTAAETDMKQYQGSGGVAMDVERSRFPYC) are extracellular. Residues 56 to 76 (VVWTPIPVLTWFFPIIGHMGI) traverse the membrane as a helical segment. The Cytoplasmic portion of the chain corresponds to 77 to 164 (CTSTGVIRDF…MRYNNSTNWN (88 aa)). A helical transmembrane segment spans residues 165–185 (MVTLCFFCLLYGKYVSVGAFV). Residue Lys186 is a topological domain, extracellular. A helical transmembrane segment spans residues 187-207 (TWLPFILLLGIILTVSLVFNL). Position 208 (Arg208) is a topological domain, cytoplasmic.

As to expression, widely expressed. The highest expression is observed in the brain.

Its subcellular location is the membrane. The protein resides in the cell projection. The protein localises to the dendrite. This chain is Transmembrane protein 222 (TMEM222), found in Homo sapiens (Human).